Reading from the N-terminus, the 1116-residue chain is Error-prone DNA polymerase 1 (1116 aa).

The protein belongs to the DNA polymerase type-C family. DnaE2 subfamily.

It is found in the cytoplasm. It catalyses the reaction DNA(n) + a 2'-deoxyribonucleoside 5'-triphosphate = DNA(n+1) + diphosphate. Functionally, DNA polymerase involved in damage-induced mutagenesis and translesion synthesis (TLS). It is not the major replicative DNA polymerase. The polypeptide is Error-prone DNA polymerase 1 (Rhizobium meliloti (strain 1021) (Ensifer meliloti)).